The primary structure comprises 254 residues: Ribosomal RNA small subunit methyltransferase J (254 aa).

S-adenosyl-L-methionine-binding positions include 106 to 107 (RD) and Asp-177.

This sequence belongs to the methyltransferase superfamily. RsmJ family.

The protein localises to the cytoplasm. The catalysed reaction is guanosine(1516) in 16S rRNA + S-adenosyl-L-methionine = N(2)-methylguanosine(1516) in 16S rRNA + S-adenosyl-L-homocysteine + H(+). Specifically methylates the guanosine in position 1516 of 16S rRNA. The chain is Ribosomal RNA small subunit methyltransferase J from Nitrosococcus oceani (strain ATCC 19707 / BCRC 17464 / JCM 30415 / NCIMB 11848 / C-107).